The chain runs to 270 residues: uncharacterized protein (270 aa).

The protein resides in the cytoplasm. This is an uncharacterized protein from Schizosaccharomyces pombe (strain 972 / ATCC 24843) (Fission yeast).